We begin with the raw amino-acid sequence, 335 residues long: Prepilin leader peptidase/N-methyltransferase (335 aa).

The chain crosses the membrane as a helical span at residues 13 to 33 (LFAVFLFVLGLCVGSFLNVVI). Zn(2+)-binding residues include Cys49, Cys52, Cys74, and Cys77. 5 helical membrane-spanning segments follow: residues 105–125 (WTYELVPALVLVSLLVPLAFI), 131–151 (ILPLSMTVPGMLAGIALAFPL), 206–226 (LLGVLLFASMQGAVVGILMLL), 258–278 (PGLPLWKRLLLVPVCLLVQPI), and 299–319 (IPFGPWLALAGLELLLLGPWL).

The protein belongs to the peptidase A24 family. Zn(2+) is required as a cofactor.

The protein localises to the cell inner membrane. The catalysed reaction is Typically cleaves a -Gly-|-Phe- bond to release an N-terminal, basic peptide of 5-8 residues from type IV prepilin, and then N-methylates the new N-terminal amino group, the methyl donor being S-adenosyl-L-methionine.. In terms of biological role, plays an essential role in type IV pili and type II pseudopili formation by proteolytically removing the leader sequence from substrate proteins and subsequently monomethylating the alpha-amino group of the newly exposed N-terminal phenylalanine. In Myxococcus xanthus (strain DK1622), this protein is Prepilin leader peptidase/N-methyltransferase (pilD).